Here is a 186-residue protein sequence, read N- to C-terminus: Threonylcarbamoyl-AMP synthase (186 aa).

Residues 5 to 186 (TQSINDAVKC…DAITGEILRL (182 aa)) form the YrdC-like domain.

It belongs to the SUA5 family. TsaC subfamily.

It is found in the cytoplasm. It catalyses the reaction L-threonine + hydrogencarbonate + ATP = L-threonylcarbamoyladenylate + diphosphate + H2O. Required for the formation of a threonylcarbamoyl group on adenosine at position 37 (t(6)A37) in tRNAs that read codons beginning with adenine. Catalyzes the conversion of L-threonine, HCO(3)(-)/CO(2) and ATP to give threonylcarbamoyl-AMP (TC-AMP) as the acyladenylate intermediate, with the release of diphosphate. In Coxiella burnetii (strain RSA 331 / Henzerling II), this protein is Threonylcarbamoyl-AMP synthase.